The following is a 451-amino-acid chain: Potassium/sodium uptake protein NtpJ (451 aa).

The next 11 helical transmembrane spans lie at 18 to 38, 46 to 66, 78 to 98, 133 to 153, 162 to 182, 192 to 212, 230 to 250, 293 to 313, 350 to 370, 380 to 400, and 410 to 430; these read IAAG…LPFF, HFID…LTTL, FLIM…PILF, ILKF…VVFI, IWFS…DLLG, VYLI…FIVW, VALS…LITE, LILT…AGGL, ALTL…VLSV, IEYI…TMGL, and LVII…VFSL.

Belongs to the TrkH potassium transport family.

It localises to the cell membrane. Functionally, mediates electrogenic transport of potassium as well as sodium. Acts probably as a potassium-sodium cotransporter. Major sodium reentry pathway at high pH values. This chain is Potassium/sodium uptake protein NtpJ (ntpJ), found in Enterococcus hirae (strain ATCC 9790 / DSM 20160 / JCM 8729 / LMG 6399 / NBRC 3181 / NCIMB 6459 / NCDO 1258 / NCTC 12367 / WDCM 00089 / R).